A 610-amino-acid chain; its full sequence is Phosphoenolpyruvate carboxykinase [GTP] (610 aa).

Substrate is bound by residues Arg-82 and 221-223; that span reads YGG. Mn(2+) contacts are provided by Lys-230 and His-250. Residue Ser-272 participates in substrate binding. A GTP-binding site is contributed by 273-278; it reads ACGKTN. Cys-274 is a catalytic residue. Asp-297 is a Mn(2+) binding site. 387 to 389 is a binding site for substrate; the sequence is NSR. Residues Arg-389, Arg-420, and 515–518 each bind GTP; that span reads FGDN.

This sequence belongs to the phosphoenolpyruvate carboxykinase [GTP] family. As to quaternary structure, monomer. Requires Mn(2+) as cofactor.

The protein localises to the cytoplasm. It catalyses the reaction oxaloacetate + GTP = phosphoenolpyruvate + GDP + CO2. It participates in carbohydrate biosynthesis; gluconeogenesis. In terms of biological role, catalyzes the conversion of oxaloacetate (OAA) to phosphoenolpyruvate (PEP), the rate-limiting step in the metabolic pathway that produces glucose from lactate and other precursors derived from the citric acid cycle. In Corynebacterium glutamicum (strain R), this protein is Phosphoenolpyruvate carboxykinase [GTP].